The chain runs to 162 residues: Large ribosomal subunit protein uL10 (162 aa).

The protein belongs to the universal ribosomal protein uL10 family. As to quaternary structure, part of the ribosomal stalk of the 50S ribosomal subunit. The N-terminus interacts with L11 and the large rRNA to form the base of the stalk. The C-terminus forms an elongated spine to which L12 dimers bind in a sequential fashion forming a multimeric L10(L12)X complex.

Its function is as follows. Forms part of the ribosomal stalk, playing a central role in the interaction of the ribosome with GTP-bound translation factors. The polypeptide is Large ribosomal subunit protein uL10 (Vibrio vulnificus (strain CMCP6)).